The primary structure comprises 1141 residues: MAASRSASRISFAKIIEPLEVPDLLALQTQSFDWLIGNDIWAERVQEAIDADRNDVPITSGLEEVFEEISPIEDFSGSMSLSFRDHRFEPPKYSVEECKDKDMTYSAPLFVTAEFTNNTTGEIKSQTVFMGDFPLMTPKGTFVINGTERVVVSQLVRSPGVYFEKAIDKASDKDLFSCKVIPSRGAWLEFEIDKRDTVGVRIDRKRRQSVTVLLKALGWDEARILERFGDFPSMRVTLEKDHTSSQDDALLDIYRKLRPGEPPTRESAQTLLENLFFNPKRYDLAKVGRYKVNKKLTLEVAHDVGVLTEDDVVRTIEYIVKLHAGQDPDNYEVDDIDHFGNRRLRTVGELIQNQVRLGLARMERVVRERMTTQDVEAITPQTLINIRPVVASIKEFFGTSQLSQFMDQTNPLAGLTHKRRLSALGPGGLSRERAGFEVRDVHPSHYGRMCPIETPEGPNIGLIGSLSTFARVNPFGFVETPYRKVENGRVTGQIDYLTADEEDRHVKAQANTPLNADGTFAEDRVLVRRKGGEVEFIPPDEVDYMDVSPRQMVSVATAMIPFLEHDDANRALMGSNMQRQSVPLLRSEAPLVGTGMEARAAKDAGDVVVCAQSGVVEDLSADYITVMHDDGTRRTYRLAKFRRSNQGTCINQKPIVFEGDRVEAGQVIADGPCTDNGEMALGKNLLVAFMPWEGHNYEDAIILSQRLVQDDVLSSIHIEEHEVDARDTKLGPEEITRDIPNVAEEVLADLDERGIIRIGAEVSPGDVLVGKVTPKGETELTPEERLLRAIFGEKAREVRDTSLKVPHGESGKVIGVRVFSREDGDELPPGVNELVRVYVAQKRKITDGDKLAGRHGNKGVIAKILPVEDMPFLPDGTAVDVVLNPHGVPRRMNIGQILETHLGWVAKTGWQVDSGAEGWKERLRGIGADAAPPGTNVATPVFDGAREEEITGLLDATLPNRDGQQMIGSSGKAELYDGRTGEPYPYPVAVGYIYILKLLHLVDDKIHARSTGPYSMITQQPLGGKAQFGGQRFGEMEVWALEAYGAAYALQELLTIKSDDVVGRVKVYEAIVKGENIPEPGIPESFKVLIKEMQSLCLNVEVLSSDGVSIEMRDTDEDVFRAAEELGIDLSRREPSSVEEV.

Belongs to the RNA polymerase beta chain family. As to quaternary structure, the RNAP catalytic core consists of 2 alpha, 1 beta, 1 beta' and 1 omega subunit. When a sigma factor is associated with the core the holoenzyme is formed, which can initiate transcription.

The catalysed reaction is RNA(n) + a ribonucleoside 5'-triphosphate = RNA(n+1) + diphosphate. In terms of biological role, DNA-dependent RNA polymerase catalyzes the transcription of DNA into RNA using the four ribonucleoside triphosphates as substrates. This chain is DNA-directed RNA polymerase subunit beta, found in Parafrankia sp. (strain EAN1pec).